Reading from the N-terminus, the 381-residue chain is Succinyl-diaminopimelate desuccinylase 1 (381 aa).

Zn(2+) is bound at residue His-70. The active site involves Asp-72. Asp-103 contributes to the Zn(2+) binding site. Glu-136 serves as the catalytic Proton acceptor. Zn(2+) contacts are provided by Glu-137, Glu-165, and His-354.

It belongs to the peptidase M20A family. DapE subfamily. In terms of assembly, homodimer. The cofactor is Zn(2+). Co(2+) is required as a cofactor.

It carries out the reaction N-succinyl-(2S,6S)-2,6-diaminopimelate + H2O = (2S,6S)-2,6-diaminopimelate + succinate. It functions in the pathway amino-acid biosynthesis; L-lysine biosynthesis via DAP pathway; LL-2,6-diaminopimelate from (S)-tetrahydrodipicolinate (succinylase route): step 3/3. In terms of biological role, catalyzes the hydrolysis of N-succinyl-L,L-diaminopimelic acid (SDAP), forming succinate and LL-2,6-diaminopimelate (DAP), an intermediate involved in the bacterial biosynthesis of lysine and meso-diaminopimelic acid, an essential component of bacterial cell walls. The protein is Succinyl-diaminopimelate desuccinylase 1 of Ruegeria sp. (strain TM1040) (Silicibacter sp.).